The chain runs to 191 residues: Fe/S biogenesis protein NfuA (191 aa).

Residues cysteine 149 and cysteine 152 each coordinate [4Fe-4S] cluster.

Belongs to the NfuA family. In terms of assembly, homodimer. [4Fe-4S] cluster serves as cofactor.

Involved in iron-sulfur cluster biogenesis. Binds a 4Fe-4S cluster, can transfer this cluster to apoproteins, and thereby intervenes in the maturation of Fe/S proteins. Could also act as a scaffold/chaperone for damaged Fe/S proteins. The chain is Fe/S biogenesis protein NfuA from Photorhabdus laumondii subsp. laumondii (strain DSM 15139 / CIP 105565 / TT01) (Photorhabdus luminescens subsp. laumondii).